The primary structure comprises 150 residues: C-type lectin 16 (150 aa).

The N-terminal stretch at 1–27 (MKRVRVKVIFVSFGLLVVFLSLSGTAA) is a signal peptide. Disulfide bonds link Cys29/Cys40, Cys57/Cys146, and Cys123/Cys138. The region spanning 36–147 (YEGHCYKPFN…CRMLARFVCE (112 aa)) is the C-type lectin domain.

The protein belongs to the snaclec family. In terms of assembly, heteromultimer; disulfide-linked. Expressed by the venom gland.

It is found in the secreted. Interferes with one step of hemostasis (modulation of platelet aggregation, or coagulation cascade, for example). In Crotalus adamanteus (Eastern diamondback rattlesnake), this protein is C-type lectin 16.